A 333-amino-acid polypeptide reads, in one-letter code: DNA repair and recombination protein RadA (333 aa).

ATP is bound at residue 127–134 (GEFGSGKT).

It belongs to the eukaryotic RecA-like protein family.

In terms of biological role, involved in DNA repair and in homologous recombination. Binds and assemble on single-stranded DNA to form a nucleoprotein filament. Hydrolyzes ATP in a ssDNA-dependent manner and promotes DNA strand exchange between homologous DNA molecules. This Pyrobaculum aerophilum (strain ATCC 51768 / DSM 7523 / JCM 9630 / CIP 104966 / NBRC 100827 / IM2) protein is DNA repair and recombination protein RadA.